Here is a 706-residue protein sequence, read N- to C-terminus: Heat shock protein 75 kDa, mitochondrial (706 aa).

A mitochondrion-targeting transit peptide spans 1–60 (MARELRALLLWGRGLQSALRAPALAGVRRGKPVLHLQKTTVHFRDPTQSLASGISAGQLY). 2 residues coordinate ATP: Asn-121 and Asp-160. The residue at position 172 (Ser-172) is a Phosphoserine. Asn-173 serves as a coordination point for ATP. Thr-176 is subject to Phosphothreonine. Ser-196 is modified (phosphoserine). Residue Phe-207 coordinates ATP. Lys-264, Lys-326, and Lys-334 each carry N6-acetyllysine. Arg-404 contributes to the ATP binding site. N6-acetyllysine occurs at positions 426, 433, and 468. The residue at position 496 (Thr-496) is a Phosphothreonine. A Phosphoserine modification is found at Ser-570.

The protein belongs to the heat shock protein 90 family. In terms of assembly, binds to the intracellular domain of tumor necrosis factor type 1 receptor. Binds to RB1. Interacts with SRC. Interacts with SDHA.

It localises to the mitochondrion. Its subcellular location is the mitochondrion inner membrane. The protein resides in the mitochondrion matrix. Functionally, chaperone that expresses an ATPase activity. Involved in maintaining mitochondrial function and polarization, downstream of PINK1 and mitochondrial complex I. Is a negative regulator of mitochondrial respiration able to modulate the balance between oxidative phosphorylation and aerobic glycolysis. The impact of TRAP1 on mitochondrial respiration is probably mediated by modulation of mitochondrial SRC and inhibition of SDHA. This Rattus norvegicus (Rat) protein is Heat shock protein 75 kDa, mitochondrial (Trap1).